The following is a 237-amino-acid chain: Putative glutathione-dependent formaldehyde-activating enzyme (237 aa).

Residues 38–152 (ITLICHCPPS…LGQSGGSEGE (115 aa)) form the CENP-V/GFA domain. Zn(2+) is bound by residues Cys42, Cys44, Cys67, Cys69, Cys72, Cys114, and Cys117.

Belongs to the Gfa family. It depends on Zn(2+) as a cofactor.

It carries out the reaction S-(hydroxymethyl)glutathione = glutathione + formaldehyde. It participates in one-carbon metabolism; formaldehyde degradation; formate from formaldehyde (glutathione route): step 1/3. Its function is as follows. Catalyzes the condensation of formaldehyde and glutathione to S-hydroxymethylglutathione. This chain is Putative glutathione-dependent formaldehyde-activating enzyme, found in Sordaria macrospora (strain ATCC MYA-333 / DSM 997 / K(L3346) / K-hell).